A 292-amino-acid polypeptide reads, in one-letter code: Protease HtpX (292 aa).

The next 2 membrane-spanning stretches (helical) occupy residues 4-24 and 34-54; these read IALFLLTNLAVMLVFGLVLSL and GLMIMAGLFGFGGSFVSLLMS. Position 139 (His-139) interacts with Zn(2+). The active site involves Glu-140. His-143 provides a ligand contact to Zn(2+). A run of 2 helical transmembrane segments spans residues 158–178 and 192–212; these read IVNTFVIFISRLIAQAAAGFL and MIYFGVSMVLELVFGILASII. Glu-221 is a binding site for Zn(2+).

Belongs to the peptidase M48B family. The cofactor is Zn(2+).

It is found in the cell inner membrane. This is Protease HtpX from Serratia proteamaculans (strain 568).